We begin with the raw amino-acid sequence, 272 residues long: GTP cyclohydrolase FolE2 (272 aa).

Belongs to the GTP cyclohydrolase IV family.

The catalysed reaction is GTP + H2O = 7,8-dihydroneopterin 3'-triphosphate + formate + H(+). Its pathway is cofactor biosynthesis; 7,8-dihydroneopterin triphosphate biosynthesis; 7,8-dihydroneopterin triphosphate from GTP: step 1/1. In terms of biological role, converts GTP to 7,8-dihydroneopterin triphosphate. The protein is GTP cyclohydrolase FolE2 of Polynucleobacter asymbioticus (strain DSM 18221 / CIP 109841 / QLW-P1DMWA-1) (Polynucleobacter necessarius subsp. asymbioticus).